The following is a 276-amino-acid chain: Proteasome chaperone 1 (276 aa).

The protein belongs to the PSMG1 family. As to quaternary structure, component of the 20S proteasome chaperone. Forms a heterodimer with ADD66 that binds to proteasome precursors.

The protein resides in the cytoplasm. In terms of biological role, involved in 20S proteasome assembly. The chain is Proteasome chaperone 1 (PBA1) from Saccharomyces cerevisiae (strain ATCC 204508 / S288c) (Baker's yeast).